A 459-amino-acid polypeptide reads, in one-letter code: Glutamyl-tRNA reductase (459 aa).

Substrate-binding positions include Thr-49–Arg-52, Ser-109, Glu-114–Gln-116, and Gln-120. Cys-50 serves as the catalytic Nucleophile. Gly-189 to Gly-194 contacts NADP(+).

The protein belongs to the glutamyl-tRNA reductase family. In terms of assembly, homodimer.

The catalysed reaction is (S)-4-amino-5-oxopentanoate + tRNA(Glu) + NADP(+) = L-glutamyl-tRNA(Glu) + NADPH + H(+). The protein operates within porphyrin-containing compound metabolism; protoporphyrin-IX biosynthesis; 5-aminolevulinate from L-glutamyl-tRNA(Glu): step 1/2. Its function is as follows. Catalyzes the NADPH-dependent reduction of glutamyl-tRNA(Glu) to glutamate 1-semialdehyde (GSA). The sequence is that of Glutamyl-tRNA reductase from Mycolicibacterium paratuberculosis (strain ATCC BAA-968 / K-10) (Mycobacterium paratuberculosis).